Here is a 147-residue protein sequence, read N- to C-terminus: Hemoglobin subunit beta (147 aa).

Val2 bears the N-acetylvaline mark. Positions 3 to 147 (HLTGDEKAAV…VANALAHKYH (145 aa)) constitute a Globin domain. Thr13 bears the Phosphothreonine mark. Phosphoserine is present on Ser45. At Lys60 the chain carries N6-acetyllysine. His64 serves as a coordination point for heme b. Lys83 carries the N6-acetyllysine modification. His93 lines the heme b pocket. Cys94 carries the post-translational modification S-nitrosocysteine. At Lys145 the chain carries N6-acetyllysine.

Belongs to the globin family. In terms of assembly, heterotetramer of two alpha chains and two beta chains. As to expression, red blood cells.

In terms of biological role, involved in oxygen transport from the lung to the various peripheral tissues. This Saimiri sciureus (Common squirrel monkey) protein is Hemoglobin subunit beta (HBB).